A 78-amino-acid polypeptide reads, in one-letter code: Biotin synthase auxiliary protein (78 aa).

This sequence belongs to the BsaP family. Iron-sulfur cluster serves as cofactor.

In terms of biological role, required for the activity of the biotin synthase BioB. The chain is Biotin synthase auxiliary protein from Mycolicibacterium smegmatis (strain ATCC 700084 / mc(2)155) (Mycobacterium smegmatis).